The following is a 357-amino-acid chain: tRNA pseudouridine synthase Pus10 (357 aa).

One can recognise a THUMP domain in the interval 1–118 (MNLCRECYGI…TFTFELQIRP (118 aa)). Aspartate 187 (nucleophile) is an active-site residue. The substrate site is built by tyrosine 251 and tyrosine 322.

The protein belongs to the pseudouridine synthase Pus10 family.

The catalysed reaction is uridine(54) in tRNA = pseudouridine(54) in tRNA. The enzyme catalyses uridine(55) in tRNA = pseudouridine(55) in tRNA. Functionally, responsible for synthesis of pseudouridine from uracil-54 and uracil-55 in the psi GC loop of transfer RNAs. This is tRNA pseudouridine synthase Pus10 from Archaeoglobus fulgidus (strain ATCC 49558 / DSM 4304 / JCM 9628 / NBRC 100126 / VC-16).